A 210-amino-acid chain; its full sequence is High frequency lysogenization protein HflD homolog (210 aa).

Positions 103 to 130 form a coiled coil; sequence EAKAKLAERLQQIERQLPLYENDIMADQ.

The protein belongs to the HflD family.

It is found in the cytoplasm. The protein localises to the cell inner membrane. The chain is High frequency lysogenization protein HflD homolog from Actinobacillus pleuropneumoniae serotype 5b (strain L20).